The following is a 125-amino-acid chain: MRHYEIVFMVHPDQSEQVPGMIERYTGSVKEAGGQVHRLEDWGRRQLAYPINKLHKAHYVLMNVEAPQEVIDELETTFRYNDAVLRNVIIRTKHAVTEASPMVKAKDDRKALAEVENNDFEDAEE.

Belongs to the bacterial ribosomal protein bS6 family.

In terms of biological role, binds together with bS18 to 16S ribosomal RNA. The polypeptide is Small ribosomal subunit protein bS6 (rpsF) (Pasteurella multocida (strain Pm70)).